The sequence spans 255 residues: Proteasome subunit alpha type-3 (255 aa).

Position 2 is an N-acetylserine (S2). K57, K206, and K230 each carry N6-acetyllysine. Phosphoserine is present on residues S243 and S250.

It belongs to the peptidase T1A family. In terms of assembly, the 26S proteasome consists of a 20S proteasome core and two 19S regulatory subunits. The 20S proteasome core is a barrel-shaped complex made of 28 subunits that are arranged in four stacked rings. The two outer rings are each formed by seven alpha subunits, and the two inner rings are formed by seven beta subunits. The proteolytic activity is exerted by three beta-subunits PSMB5, PSMB6 and PSMB7. Interacts with AURKB. Interacts with CDKN1A. Interacts with MDM2 and RB1. Interacts with the C-terminus of TBXA2R isoform 2. Interacts with DNAJB2.

Its subcellular location is the cytoplasm. It localises to the nucleus. Its function is as follows. Component of the 20S core proteasome complex involved in the proteolytic degradation of most intracellular proteins. This complex plays numerous essential roles within the cell by associating with different regulatory particles. Associated with two 19S regulatory particles, forms the 26S proteasome and thus participates in the ATP-dependent degradation of ubiquitinated proteins. The 26S proteasome plays a key role in the maintenance of protein homeostasis by removing misfolded or damaged proteins that could impair cellular functions, and by removing proteins whose functions are no longer required. Associated with the PA200 or PA28, the 20S proteasome mediates ubiquitin-independent protein degradation. This type of proteolysis is required in several pathways including spermatogenesis (20S-PA200 complex) or generation of a subset of MHC class I-presented antigenic peptides (20S-PA28 complex). Binds to the C-terminus of CDKN1A and thereby mediates its degradation. Negatively regulates the membrane trafficking of the cell-surface thromboxane A2 receptor (TBXA2R) isoform 2. The sequence is that of Proteasome subunit alpha type-3 (PSMA3) from Bos taurus (Bovine).